Reading from the N-terminus, the 477-residue chain is Glycogen synthase (477 aa).

ADP-alpha-D-glucose is bound at residue Lys-15.

Belongs to the glycosyltransferase 1 family. Bacterial/plant glycogen synthase subfamily.

It catalyses the reaction [(1-&gt;4)-alpha-D-glucosyl](n) + ADP-alpha-D-glucose = [(1-&gt;4)-alpha-D-glucosyl](n+1) + ADP + H(+). It participates in glycan biosynthesis; glycogen biosynthesis. Its function is as follows. Synthesizes alpha-1,4-glucan chains using ADP-glucose. The sequence is that of Glycogen synthase from Shigella flexneri.